The following is a 348-amino-acid chain: Protein RecA (348 aa).

Residue 66-73 (GPESSGKT) coordinates ATP.

This sequence belongs to the RecA family.

It is found in the cytoplasm. Its function is as follows. Can catalyze the hydrolysis of ATP in the presence of single-stranded DNA, the ATP-dependent uptake of single-stranded DNA by duplex DNA, and the ATP-dependent hybridization of homologous single-stranded DNAs. It interacts with LexA causing its activation and leading to its autocatalytic cleavage. The polypeptide is Protein RecA (Neisseria meningitidis serogroup C / serotype 2a (strain ATCC 700532 / DSM 15464 / FAM18)).